Here is a 497-residue protein sequence, read N- to C-terminus: Putative BTB/POZ domain-containing protein R738 (497 aa).

In terms of domain architecture, BTB spans 16 to 86 (SDCKLVLDDG…FYEKSNVINA (71 aa)).

This sequence belongs to the mimivirus BTB/WD family.

This chain is Putative BTB/POZ domain-containing protein R738, found in Acanthamoeba polyphaga (Amoeba).